A 241-amino-acid chain; its full sequence is Octanoyltransferase (241 aa).

The BPL/LPL catalytic domain occupies 38-227 (AGGPDTLLLL…AVCNALDGAL (190 aa)). Residues 85-92 (RGGKITWH), 157-159 (AIG), and 170-172 (GFA) each bind substrate. Cysteine 188 (acyl-thioester intermediate) is an active-site residue.

Belongs to the LipB family.

Its subcellular location is the cytoplasm. It catalyses the reaction octanoyl-[ACP] + L-lysyl-[protein] = N(6)-octanoyl-L-lysyl-[protein] + holo-[ACP] + H(+). It functions in the pathway protein modification; protein lipoylation via endogenous pathway; protein N(6)-(lipoyl)lysine from octanoyl-[acyl-carrier-protein]: step 1/2. Its function is as follows. Catalyzes the transfer of endogenously produced octanoic acid from octanoyl-acyl-carrier-protein onto the lipoyl domains of lipoate-dependent enzymes. Lipoyl-ACP can also act as a substrate although octanoyl-ACP is likely to be the physiological substrate. The sequence is that of Octanoyltransferase from Mycobacterium marinum (strain ATCC BAA-535 / M).